An 895-amino-acid chain; its full sequence is Alanine--tRNA ligase (895 aa).

Positions 586, 590, 690, and 694 each coordinate Zn(2+).

Belongs to the class-II aminoacyl-tRNA synthetase family. Requires Zn(2+) as cofactor.

It localises to the cytoplasm. The enzyme catalyses tRNA(Ala) + L-alanine + ATP = L-alanyl-tRNA(Ala) + AMP + diphosphate. Its function is as follows. Catalyzes the attachment of alanine to tRNA(Ala) in a two-step reaction: alanine is first activated by ATP to form Ala-AMP and then transferred to the acceptor end of tRNA(Ala). Also edits incorrectly charged Ser-tRNA(Ala) and Gly-tRNA(Ala) via its editing domain. The protein is Alanine--tRNA ligase of Korarchaeum cryptofilum (strain OPF8).